Reading from the N-terminus, the 956-residue chain is Pollen-specific leucine-rich repeat extensin-like protein 1 (956 aa).

Residues 1-30 (MTRRTMEKPFGCFLLLFCFTISIFFYSAAA) form the signal peptide. LRR repeat units follow at residues 39–59 (LTRRQLLALSENGDLPDDIEY), 60–84 (EVDLDLKFANNRLKRAYIALQAWKK), 119–143 (VLVVAGIDLNHADIAGYLPPELGLL), 144–166 (TDVALFHVNSNRFCGVIPKSLSK), 168–191 (TLMYEFDVSNNRFVGPFPTVALSW), 192–215 (PSLKFLDIRYNDFEGKLPPEIFDK), 217–238 (LDAIFLNNNRFESTIPETIGKS), 240–261 (ASVVTFAHNKFSGCIPKTIGQM), 262–285 (KNLNEIVFIGNNLSGCLPNEIGSL), 287–309 (NVTVFDASSNGFVGSLPSTLSGL), and 310–332 (ANVEQMDFSYNKFTGFVTDNICK). Residues N273 and N287 are each glycosylated (N-linked (GlcNAc...) asparagine). N-linked (GlcNAc...) asparagine glycosylation is present at N338. A compositionally biased stretch (polar residues) spans 355–377 (PGSSQEKQFDDTSNCLQNRPNQK). Disordered regions lie at residues 355 to 380 (PGSSQEKQFDDTSNCLQNRPNQKSAK) and 397 to 956 (CAGG…FPGY). Residues 408 to 417 (SPKPTPTPKA) are compositionally biased toward pro residues. 2 stretches are compositionally biased toward basic and acidic residues: residues 431 to 441 (EPSKPKPEESP) and 452 to 534 (TPSH…EESP). A compositionally biased stretch (pro residues) spans 640 to 830 (QSPPVHSPPP…KPVTPLPPAT (191 aa)). A contains the Ser-Pro(4) repeats region spans residues 651–956 (PPVHSPPPPV…SPPPPMFPGY (306 aa)). Polar residues predominate over residues 837 to 852 (PTPSSSESGEISTPVQ). Residues 947 to 956 (SPPPPMFPGY) show a composition bias toward pro residues.

Hydroxylated on proline residues in the S-P-P-P-P repeat. In terms of processing, O-glycosylated on hydroxyprolines. Expressed in flowers, stamen, pollen, and pollinated carpels.

Its subcellular location is the secreted. It is found in the cell wall. In terms of biological role, modulates cell morphogenesis by regulating cell wall formation and assembly, and/or growth polarization. This is Pollen-specific leucine-rich repeat extensin-like protein 1 (PEX1) from Arabidopsis thaliana (Mouse-ear cress).